We begin with the raw amino-acid sequence, 307 residues long: Porphobilinogen deaminase (307 aa).

The residue at position 241 (Cys241) is an S-(dipyrrolylmethanemethyl)cysteine.

This sequence belongs to the HMBS family. As to quaternary structure, monomer. Dipyrromethane serves as cofactor.

The catalysed reaction is 4 porphobilinogen + H2O = hydroxymethylbilane + 4 NH4(+). Its pathway is porphyrin-containing compound metabolism; protoporphyrin-IX biosynthesis; coproporphyrinogen-III from 5-aminolevulinate: step 2/4. In terms of biological role, tetrapolymerization of the monopyrrole PBG into the hydroxymethylbilane pre-uroporphyrinogen in several discrete steps. The polypeptide is Porphobilinogen deaminase (Coxiella burnetii (strain CbuK_Q154) (Coxiella burnetii (strain Q154))).